A 71-amino-acid chain; its full sequence is Bowman-Birk type trypsin inhibitor (71 aa).

6 cysteine pairs are disulfide-bonded: C10/C67, C11/C27, C14/C63, C17/C25, C35/C42, and C39/C55.

It belongs to the Bowman-Birk serine protease inhibitor family.

Functionally, inhibits trypsin but not chymotrypsin. The sequence is that of Bowman-Birk type trypsin inhibitor from Triticum aestivum (Wheat).